The primary structure comprises 392 residues: Cellobiose 2-epimerase (392 aa).

Belongs to the cellobiose 2-epimerase family.

It carries out the reaction D-cellobiose = beta-D-glucosyl-(1-&gt;4)-D-mannopyranose. In terms of biological role, catalyzes the reversible epimerization of cellobiose to 4-O-beta-D-glucopyranosyl-D-mannose (Glc-Man). Can also epimerize cellotriose to Glc-Glc-Man, cellotetraose to Glc-Glc-Glc-Man, lactose to epilactose, and mannobiose to 4-O-beta-D-mannopyranosyl-D-glucopyranose (Man-Glc). May function as a mannobiose 2-epimerase in vivo and be involved in a mannan catabolic pathway which feeds into glycolysis. The chain is Cellobiose 2-epimerase (bfce) from Bacteroides fragilis (strain ATCC 25285 / DSM 2151 / CCUG 4856 / JCM 11019 / LMG 10263 / NCTC 9343 / Onslow / VPI 2553 / EN-2).